A 301-amino-acid chain; its full sequence is Phosphatidylcholine:diacylglycerol cholinephosphotransferase 1 (301 aa).

Residues 1–39 form a disordered region; it reads MSAAAAETDVSLRRRSNSLNGNHTNGVAIDGTLDNNNRR. 5 helical membrane-spanning segments follow: residues 88-108, 141-161, 171-191, 202-222, and 255-275; these read HWIPCMFAAGLLFFMGVEYTL, VLAALNTVFVGMQTTYIVWTW, IAALFMFTCRGILGYSTQLPL, FPVGNVSFFLFFSGHVAGSMI, and GHYTIDLAVGVGAGILFDSLA. Catalysis depends on residues His-216, His-256, and Asp-260.

It belongs to the phosphatidylcholine:diacylglycerol cholinephosphotransferase family.

It is found in the membrane. The catalysed reaction is 1,2-ditetradecanoyl-sn-glycero-3-phosphocholine + 1,2-di-(9Z-octadecenoyl)-sn-glycerol = 1,2-ditetradecanoyl-sn-glycerol + 1,2-di-(9Z-octadecenoyl)-sn-glycero-3-phosphocholine. Functionally, functions as a phosphatidylcholine:diacylglycerol cholinephosphotransferase that catalyzes the transfer of the phosphocholine headgroup from phosphatidylcholine (PC) to diacylglycerol, a major reaction for the transfer of 18:1 into phosphatidylcholine for desaturation and also for the reverse transfer of 18:2 and 18:3 into the triacylglycerols synthesis pathway. The sequence is that of Phosphatidylcholine:diacylglycerol cholinephosphotransferase 1 from Arabidopsis thaliana (Mouse-ear cress).